Reading from the N-terminus, the 107-residue chain is Heme-degrading monooxygenase (107 aa).

An ABM domain is found at 2–94; the sequence is IIVTNTAKIT…YILDNKISYY (93 aa). Residue N6 coordinates Fe cation. Residue H76 participates in heme binding.

This sequence belongs to the antibiotic biosynthesis monooxygenase family. Heme-degrading monooxygenase IsdG subfamily. As to quaternary structure, homodimer.

Its subcellular location is the cytoplasm. The enzyme catalyses heme b + 3 reduced [NADPH--hemoprotein reductase] + 3 O2 = biliverdin IXalpha + CO + Fe(2+) + 3 oxidized [NADPH--hemoprotein reductase] + 3 H2O + H(+). Its function is as follows. Allows bacterial pathogens to use the host heme as an iron source. Catalyzes the oxidative degradation of the heme macrocyclic porphyrin ring to the biliverdin in the presence of a suitable electron donor such as ascorbate or NADPH--cytochrome P450 reductase, with subsequent release of free iron. The protein is Heme-degrading monooxygenase of Bacillus cereus (strain AH187).